The following is a 495-amino-acid chain: Cytochrome P450 monooxygenase 64 (495 aa).

The helical transmembrane segment at 2 to 22 (FLQIVTSVLATGLLYALISVL) threads the bilayer. Residues Asn25 and Asn198 are each glycosylated (N-linked (GlcNAc...) asparagine). Cys428 serves as a coordination point for heme.

It belongs to the cytochrome P450 family. Heme serves as cofactor.

It is found in the membrane. It participates in secondary metabolite biosynthesis. Functionally, cytochrome P450 monooxygenase that is able to use 4-ethoxybenzoic acid as a substrate for oxidation. This Postia placenta (strain ATCC 44394 / Madison 698-R) (Brown rot fungus) protein is Cytochrome P450 monooxygenase 64.